Reading from the N-terminus, the 183-residue chain is Peptidyl-tRNA hydrolase (183 aa).

Y15 provides a ligand contact to tRNA. H20 acts as the Proton acceptor in catalysis. TRNA contacts are provided by Y67 and N69.

It belongs to the PTH family. In terms of assembly, monomer.

It is found in the cytoplasm. It catalyses the reaction an N-acyl-L-alpha-aminoacyl-tRNA + H2O = an N-acyl-L-amino acid + a tRNA + H(+). Its function is as follows. Hydrolyzes ribosome-free peptidyl-tRNAs (with 1 or more amino acids incorporated), which drop off the ribosome during protein synthesis, or as a result of ribosome stalling. In terms of biological role, catalyzes the release of premature peptidyl moieties from peptidyl-tRNA molecules trapped in stalled 50S ribosomal subunits, and thus maintains levels of free tRNAs and 50S ribosomes. In Chlamydia caviae (strain ATCC VR-813 / DSM 19441 / 03DC25 / GPIC) (Chlamydophila caviae), this protein is Peptidyl-tRNA hydrolase.